Consider the following 340-residue polypeptide: Probable complex I intermediate-associated protein 30, mitochondrial (340 aa).

It belongs to the CIA30 family.

The protein localises to the mitochondrion. Chaperone protein involved in the assembly of the mitochondrial NADH:ubiquinone oxidoreductase complex (complex I). Required for normal growth and reproduction. This chain is Probable complex I intermediate-associated protein 30, mitochondrial (nuaf-1), found in Caenorhabditis elegans.